A 441-amino-acid polypeptide reads, in one-letter code: UBX domain-containing protein 6 (441 aa).

The tract at residues Met-1–Ala-10 is mediates interaction with LMAN1. Lys-2 bears the N-acetylalanine mark. Disordered regions lie at residues Lys-13–Ile-79 and Leu-87–Ser-106. Residues Lys-22–Pro-36 show a composition bias toward basic and acidic residues. The tract at residues Glu-51–Leu-63 is VCP/p97-interacting motif (VIM). The segment covering Ala-52–Ala-61 has biased composition (low complexity). Ser-96 bears the Phosphoserine mark. Positions Val-175 to Glu-244 constitute a PUB domain. In terms of domain architecture, UBX spans Arg-332 to Phe-408.

As to quaternary structure, interacts with VCP through the PUB domain (via C-terminus) and VIM motif (via N-terminus); the interaction is direct. Forms a ternary complex with CAV1 and VCP. Interacts with SYVN1. Interacts with HERPUD1. Interacts with VCPKMT. May interact with DERL1. Interacts with PLAA, VCP and YOD1; may form a complex involved in macroautophagy. Interacts with LMAN1. Enhanced expression in testis.

It is found in the cytoplasm. The protein localises to the cytosol. The protein resides in the membrane. It localises to the nucleus. Its subcellular location is the cytoskeleton. It is found in the microtubule organizing center. The protein localises to the centrosome. The protein resides in the early endosome membrane. It localises to the late endosome membrane. Its subcellular location is the lysosome membrane. Its function is as follows. May negatively regulate the ATPase activity of VCP, an ATP-driven segregase that associates with different cofactors to control a wide variety of cellular processes. As a cofactor of VCP, it may play a role in the transport of CAV1 to lysosomes for degradation. It may also play a role in endoplasmic reticulum-associated degradation (ERAD) of misfolded proteins. Together with VCP and other cofactors, it may play a role in macroautophagy, regulating for instance the clearance of damaged lysosomes. The sequence is that of UBX domain-containing protein 6 from Homo sapiens (Human).